The primary structure comprises 539 residues: Squalene monooxygenase SE1 (539 aa).

The next 2 membrane-spanning stretches (helical) occupy residues 22–42 (LLID…FLLL) and 71–91 (IAGS…ALAY). FAD contacts are provided by residues 84 to 85 (VA), 104 to 105 (ER), Arg-112, Arg-183, Val-199, Asp-361, and Met-374. The chain crosses the membrane as a helical span at residues 472 to 492 (LFLHFFAVAIYGVGRLLIPFP).

Belongs to the squalene monooxygenase family. FAD is required as a cofactor. Mostly expressed in flower buds and leaves, and, to a lower extent, at high levels thought, in roots and petioles. In petioles, preferentially observed in vascular bundle tissue (phloem cells and parenchymatous cells near xylem) and resin ducts.

Its subcellular location is the microsome membrane. It localises to the endoplasmic reticulum membrane. The enzyme catalyses squalene + reduced [NADPH--hemoprotein reductase] + O2 = (S)-2,3-epoxysqualene + oxidized [NADPH--hemoprotein reductase] + H2O + H(+). It participates in terpene metabolism; lanosterol biosynthesis; lanosterol from farnesyl diphosphate: step 2/3. Functionally, component of the triterpene saponins (e.g. ginsenosides or panaxosides) and phytosterols biosynthetic pathways. Catalyzes the first oxygenation step in sterol biosynthesis and is suggested to be one of the rate-limiting enzymes in this pathway. The protein is Squalene monooxygenase SE1 of Panax ginseng (Korean ginseng).